A 239-amino-acid polypeptide reads, in one-letter code: Ras-like protein B (239 aa).

Residues 13-18, 29-35, 59-60, 139-142, and 169-171 each bind GTP; these read GVGKTA, VETYDPT, AG, NKSD, and SAK. The short motif at 32–40 is the Effector region element; the sequence is YDPTIEDSY. The segment at 191–227 is disordered; sequence RQQQQGGRAQDRRPTGLGPMRDRDAGPEYPKTFRPDR. A compositionally biased stretch (basic and acidic residues) spans 199-226; the sequence is AQDRRPTGLGPMRDRDAGPEYPKTFRPD.

This sequence belongs to the small GTPase superfamily. Ras family. In terms of assembly, interacts with mpkA.

The enzyme catalyses GTP + H2O = GDP + phosphate + H(+). Its function is as follows. Ras-like protein involved in the activation of Ras protein signal transduction. Ras proteins bind GDP/GTP and possess intrinsic GTPase activity. Plays a role in hyphal morphology and conidiophore development. Required for full virulence. This is Ras-like protein B from Aspergillus fumigatus (strain ATCC MYA-4609 / CBS 101355 / FGSC A1100 / Af293) (Neosartorya fumigata).